Here is a 338-residue protein sequence, read N- to C-terminus: DNA-directed RNA polymerase subunit alpha (338 aa).

An alpha N-terminal domain (alpha-NTD) region spans residues 1-234 (MIHKNWAELI…DQLGIFVNFE (234 aa)). The tract at residues 250–338 (FNPLLLKKVD…DLAKKFEDSF (89 aa)) is alpha C-terminal domain (alpha-CTD).

It belongs to the RNA polymerase alpha chain family. In terms of assembly, homodimer. The RNAP catalytic core consists of 2 alpha, 1 beta, 1 beta' and 1 omega subunit. When a sigma factor is associated with the core the holoenzyme is formed, which can initiate transcription.

The catalysed reaction is RNA(n) + a ribonucleoside 5'-triphosphate = RNA(n+1) + diphosphate. Functionally, DNA-dependent RNA polymerase catalyzes the transcription of DNA into RNA using the four ribonucleoside triphosphates as substrates. The protein is DNA-directed RNA polymerase subunit alpha of Roseobacter denitrificans (strain ATCC 33942 / OCh 114) (Erythrobacter sp. (strain OCh 114)).